Reading from the N-terminus, the 532-residue chain is Membrane protein insertase YidC (532 aa).

6 consecutive transmembrane segments (helical) span residues 6–26 (IVLA…FAEY), 317–337 (AIDF…LTFF), 342–362 (GNWG…FWPL), 411–431 (GGCL…QALL), 451–473 (VWLA…GASM), and 496–516 (PIIF…YWLF).

This sequence belongs to the OXA1/ALB3/YidC family. Type 1 subfamily. Interacts with the Sec translocase complex via SecD. Specifically interacts with transmembrane segments of nascent integral membrane proteins during membrane integration.

It is found in the cell membrane. Required for the insertion and/or proper folding and/or complex formation of integral membrane proteins into the membrane. Involved in integration of membrane proteins that insert both dependently and independently of the Sec translocase complex, as well as at least some lipoproteins. Aids folding of multispanning membrane proteins. The polypeptide is Membrane protein insertase YidC (Lawsonia intracellularis (strain PHE/MN1-00)).